The sequence spans 254 residues: Proteasome subunit alpha type-7 (254 aa).

A glycan (O-linked (GlcNAc) serine) is linked at serine 136. Phosphotyrosine is present on tyrosine 159. The residue at position 233 (lysine 233) is an N6-acetyllysine.

It belongs to the peptidase T1A family. As to quaternary structure, the 26S proteasome consists of a 20S proteasome core and two 19S regulatory subunits. The 20S proteasome core is a barrel-shaped complex made of 28 subunits that are arranged in four stacked rings. The two outer rings are each formed by seven alpha subunits, and the two inner rings are formed by seven beta subunits. The proteolytic activity is exerted by three beta-subunits PSMB5, PSMB6 and PSMB7. PSMA7 interacts directly with the PSMG1-PSMG2 heterodimer which promotes 20S proteasome assembly. Interacts with HIF1A. Interacts with RAB7A. Interacts with PRKN. Interacts with ABL1 and ABL2. Interacts with EMAP2. Interacts with MAVS. In terms of tissue distribution, ubiquitous.

It localises to the cytoplasm. Its subcellular location is the nucleus. Functionally, component of the 20S core proteasome complex involved in the proteolytic degradation of most intracellular proteins. This complex plays numerous essential roles within the cell by associating with different regulatory particles. Associated with two 19S regulatory particles, forms the 26S proteasome and thus participates in the ATP-dependent degradation of ubiquitinated proteins. The 26S proteasome plays a key role in the maintenance of protein homeostasis by removing misfolded or damaged proteins that could impair cellular functions, and by removing proteins whose functions are no longer required. Associated with the PA200 or PA28, the 20S proteasome mediates ubiquitin-independent protein degradation. This type of proteolysis is required in several pathways including spermatogenesis (20S-PA200 complex) or generation of a subset of MHC class I-presented antigenic peptides (20S-PA28 complex). Inhibits the transactivation function of HIF-1A under both normoxic and hypoxia-mimicking conditions. The interaction with EMAP2 increases the proteasome-mediated HIF-1A degradation under the hypoxic conditions. Plays a role in hepatitis C virus internal ribosome entry site-mediated translation. Mediates nuclear translocation of the androgen receptor (AR) and thereby enhances androgen-mediated transactivation. Promotes MAVS degradation and thereby negatively regulates MAVS-mediated innate immune response. The protein is Proteasome subunit alpha type-7 (Psma7) of Rattus norvegicus (Rat).